Reading from the N-terminus, the 45-residue chain is Mu-conotoxin-like Cal 12.1.1d (45 aa).

4 cysteine pairs are disulfide-bonded: Cys3–Cys16, Cys11–Cys28, Cys18–Cys33, and Cys27–Cys39. Trp17 is modified (6'-bromotryptophan). At Glu21 the chain carries 4-carboxyglutamate. At Pro23 the chain carries 4-hydroxyproline. 6'-bromotryptophan occurs at positions 37 and 38. Pro40 is modified (4-hydroxyproline). Residue Trp44 is modified to 6'-bromotryptophan.

As to expression, expressed by the venom duct.

The protein localises to the secreted. In terms of biological role, mu-conotoxins block voltage-gated sodium channels. This toxin reversibly blocks voltage-gated sodium channel in cephalopods, with no alteration in the voltage dependence of sodium conductance or on the kinetics of inactivation. In Californiconus californicus (California cone), this protein is Mu-conotoxin-like Cal 12.1.1d.